Here is a 1119-residue protein sequence, read N- to C-terminus: DISARM protein DrmA (1119 aa).

The segment at 73 to 95 (PESGMEEDVEQQRNSELEQEAEE) is disordered. In terms of domain architecture, Helicase C-terminal spans 813–986 (ELSKYIDPYR…ATPYASRARD (174 aa)).

The protein belongs to the helicase family.

The protein resides in the cytoplasm. Its function is as follows. Component of antiviral defense system DISARM (defense island system associated with restriction-modification), composed of DrmE, DrmA, DrmB, DrmC and DrmMII. DISARM is probably a multi-gene restriction module, this subunit is probably a helicase. Expression of DISARM in B.subtilis (strain BEST7003) confers resistance to phages Nf, phi29, phi105, phi3T, SPO1, SPR and SPP1. Protection is over 10(7)-fold against phi3T, 10(4)-10(5)-fold against Nf, phi29, phi105 and SPR, 100-fold against SPO1 and 10-fold against SPP1. DISARM does not interfere with phage adsorption, but instead interferes with (phi3T) DNA replication early in its cycle, preventing replication, circularization and lysogeny and probably causes phage DNA degradation (DNA is degraded in SPP1-infected cells). This is DISARM protein DrmA from Bacillus paralicheniformis (strain ATCC 9945a / NCIMB 11709 / CD-2).